The primary structure comprises 228 residues: L-ribulose-5-phosphate 4-epimerase UlaF (228 aa).

Substrate-binding positions include 26 to 27 (GN), 43 to 44 (SG), and 72 to 73 (SS). Zn(2+) contacts are provided by aspartate 74, histidine 93, and histidine 95. Residue aspartate 118 is the Proton donor/acceptor of the active site. Residue histidine 167 coordinates Zn(2+). Residue tyrosine 225 is the Proton donor/acceptor of the active site.

The protein belongs to the aldolase class II family. AraD/FucA subfamily. It depends on Zn(2+) as a cofactor.

The catalysed reaction is L-ribulose 5-phosphate = D-xylulose 5-phosphate. Its pathway is cofactor degradation; L-ascorbate degradation; D-xylulose 5-phosphate from L-ascorbate: step 4/4. In terms of biological role, catalyzes the isomerization of L-ribulose 5-phosphate to D-xylulose 5-phosphate. Is involved in the anaerobic L-ascorbate utilization. In Escherichia fergusonii (strain ATCC 35469 / DSM 13698 / CCUG 18766 / IAM 14443 / JCM 21226 / LMG 7866 / NBRC 102419 / NCTC 12128 / CDC 0568-73), this protein is L-ribulose-5-phosphate 4-epimerase UlaF.